A 148-amino-acid chain; its full sequence is Protein RESISTANCE TO POWDERY MILDEW 8.1 (148 aa).

In terms of domain architecture, RPW8 spans methionine 1–alanine 148. A helical membrane pass occupies residues alanine 7–phenylalanine 23. A coiled-coil region spans residues aspartate 120–isoleucine 140.

Belongs to the plant RPW8 protein family.

The protein localises to the membrane. In terms of biological role, disease resistance (R) protein that induces localized, salicylic acid-dependent defenses. Confers resistance to powdery mildew (e.g. Erysiphe cichoracearum UCSC1). The chain is Protein RESISTANCE TO POWDERY MILDEW 8.1 from Arabidopsis thaliana (Mouse-ear cress).